The sequence spans 603 residues: Serine protease 56 (603 aa).

The N-terminal stretch at 1-19 (MLLAVLLLLPLPSSWFAHG) is a signal peptide. Residues 64–96 (SHECRGSGRPRPQALLQDPPEPGPCGERRPSTA) are disordered. N-linked (GlcNAc...) asparagine glycosylation occurs at Asn-97. Positions 105–337 (IVGGSAAPPG…FKDWLQEQMS (233 aa)) constitute a Peptidase S1 domain. Residues Cys-130 and Cys-146 are joined by a disulfide bond. Catalysis depends on charge relay system residues His-145 and Asp-191. 3 disulfide bridges follow: Cys-225–Cys-292, Cys-256–Cys-271, and Cys-282–Cys-313. The active-site Charge relay system is Ser-286. Disordered regions lie at residues 442–474 (PARELRLHSGSRAAGTRFPKRRPEPRGEANGCP) and 573–603 (EGPWMDVGQGPGLERKGHHPLNPQVPPARQP).

It belongs to the peptidase S1 family. Expressed neural retina, cornea, sclera and optic nerve.

Functionally, serine protease required during eye development. The polypeptide is Serine protease 56 (PRSS56) (Homo sapiens (Human)).